The following is a 410-amino-acid chain: Tryptophan synthase beta chain (410 aa).

Lys100 bears the N6-(pyridoxal phosphate)lysine mark.

This sequence belongs to the TrpB family. In terms of assembly, tetramer of two alpha and two beta chains. Requires pyridoxal 5'-phosphate as cofactor.

The enzyme catalyses (1S,2R)-1-C-(indol-3-yl)glycerol 3-phosphate + L-serine = D-glyceraldehyde 3-phosphate + L-tryptophan + H2O. It functions in the pathway amino-acid biosynthesis; L-tryptophan biosynthesis; L-tryptophan from chorismate: step 5/5. Its function is as follows. The beta subunit is responsible for the synthesis of L-tryptophan from indole and L-serine. This Pyrobaculum aerophilum (strain ATCC 51768 / DSM 7523 / JCM 9630 / CIP 104966 / NBRC 100827 / IM2) protein is Tryptophan synthase beta chain.